The sequence spans 812 residues: MKNNQFGRIRLDRTTELEELKNIHFIDADLLADPKAQLKDFLKRSCLVSNSEATFQQKLSNLLATPDQTMAAFFESDQPLTLEIFILLELQLLQFEADTDYQIEDPLSAISKIQLPELDLKNFETSADVAHAWYNLLTTHTKNGEVYLDRLTQQGYFVSFYPTTTKPLFFNGKAQAVFDPHQLIREVVYVEAPLDTDHDGQRDLLKAEILRPAQTAHGYQAPVLYTASPYNQGTNDSYGEAITHNVDVPLTEKAVQKISKSDVTAEPFSQTLPAERKVAGMATKASETFAREQPYTLNNYFLSRGFAVVYAAGIGTRDSDGLRDTGSVEETISTTAIIEWLAGNRRAFTNKTDNLEIKASWSNHKIAMTGRSYLGTLATAAATTGVEGLETIISEAAISSWYDYYRDGGLVAAPDTFQGEDMDVLAAEVLSRKHDAGDYLGIKAHFDQILKRIEKDQDRDSGNYSKYWDSKNYLNNVKNIKADIIMVHGLNDWNVKPRNVGKLWNAVRDLPINKKIILHQGQHIYINAFRSIDFTDMMNLWLSYKLFDVQNGANEVLPNVIIQDNVEPETWNTYQDWQAADDEIREFTLQAKTLVDRASETKNEAASFRDSLDPEFFEMYKNDLKHWHTDLLNTEHATNGKNQMRNNRLIFKTAQTKEDWLIDGTPEVSVNVAVNQPFGMLSFQLVDFGDAKRLNPSPSILQPRSLSGSFDWRTDDLREFTLQNAVTPWKMISKGHINLQNRTNNYCVDEVKPHQFYDVKLELQPTFYRLLAGHQLGLVIYATDFETTIRGNQELLYSLQLNQSHLKIKLAH.

Catalysis depends on charge relay system residues serine 372, aspartate 492, and histidine 523.

This sequence belongs to the peptidase S15 family. In terms of assembly, homodimer.

It localises to the cytoplasm. The catalysed reaction is Hydrolyzes Xaa-Pro-|- bonds to release unblocked, N-terminal dipeptides from substrates including Ala-Pro-|-p-nitroanilide and (sequentially) Tyr-Pro-|-Phe-Pro-|-Gly-Pro-|-Ile.. Its function is as follows. Removes N-terminal dipeptides sequentially from polypeptides having unsubstituted N-termini provided that the penultimate residue is proline. This is Xaa-Pro dipeptidyl-peptidase from Pediococcus pentosaceus (strain ATCC 25745 / CCUG 21536 / LMG 10740 / 183-1w).